The primary structure comprises 699 residues: Polyribonucleotide nucleotidyltransferase (699 aa).

Mg(2+)-binding residues include D485 and D491. The 60-residue stretch at 552 to 611 (PRITTIKINPEKIRDVIGKGGAVIRALTEETGTTIELEDDGTVRIASSNGEATKEAIRRI) folds into the KH domain. Positions 621 to 689 (GRIYNGKVIR…RQGRVRLSIK (69 aa)) constitute an S1 motif domain.

It belongs to the polyribonucleotide nucleotidyltransferase family. As to quaternary structure, component of the RNA degradosome, which is a multiprotein complex involved in RNA processing and mRNA degradation. Requires Mg(2+) as cofactor.

It is found in the cytoplasm. It carries out the reaction RNA(n+1) + phosphate = RNA(n) + a ribonucleoside 5'-diphosphate. Its function is as follows. Involved in mRNA degradation. Catalyzes the phosphorolysis of single-stranded polyribonucleotides processively in the 3'- to 5'-direction. The protein is Polyribonucleotide nucleotidyltransferase of Shewanella sp. (strain W3-18-1).